A 479-amino-acid chain; its full sequence is Ribosomal RNA small subunit methyltransferase F (479 aa).

Residues 125-131, glutamate 149, aspartate 176, and aspartate 194 contribute to the S-adenosyl-L-methionine site; that span reads AAAPGSK. Cysteine 247 serves as the catalytic Nucleophile.

This sequence belongs to the class I-like SAM-binding methyltransferase superfamily. RsmB/NOP family.

The protein resides in the cytoplasm. The enzyme catalyses cytidine(1407) in 16S rRNA + S-adenosyl-L-methionine = 5-methylcytidine(1407) in 16S rRNA + S-adenosyl-L-homocysteine + H(+). Functionally, specifically methylates the cytosine at position 1407 (m5C1407) of 16S rRNA. The chain is Ribosomal RNA small subunit methyltransferase F from Shigella sonnei (strain Ss046).